Here is a 510-residue protein sequence, read N- to C-terminus: MKEHLVIFDTTLRDGEQSPGASMTMEEKVRIARQLERMGVDVIEAGFPAASRGDFEAVRAVAEAVSNSTVCGLARAMEADIDRTGEALQVNQNVRIHTFIATSPIHMKNKLRMSPDQVIDQAIKAVKWARQYTDNVEFSPEDAGRSEIDFLCRVLEAVIDAGARTLNIPDTVGYTMPDQFGGLIRTLRERIPNSDKAIFSVHCHNDLGLAVANSLSAVMNGARQVECTINGLGERAGNAALEEIVMAVRTRQDYFPCDTRIDTTQIVPASKLVSGITGFPVQPNKAIVGANAFAHESGIHQDGVLKHRETYEIMRAEDVGWGANKLLLGKHSGRNAFRSRLKELGIGLESEEKLNAIFLRFKDLADKKHEIFDEDLHALVSDEAQIPEEHYRLLSLHAVSETGEIPSAQVVIAVGGSEKQAVSEGSGPVDATFRAIEKILDSKVELQLFSVNNITSGTDAQGEVTVRLQKAGRIVNGHGADTDIIAASAKAYLSACNKLHSSLERTHPQI.

Residues 5–267 (LVIFDTTLRD…DTRIDTTQIV (263 aa)) form the Pyruvate carboxyltransferase domain. Residues aspartate 14, histidine 202, histidine 204, and asparagine 238 each coordinate Mn(2+). Residues 392-510 (RLLSLHAVSE…SSLERTHPQI (119 aa)) are regulatory domain.

Belongs to the alpha-IPM synthase/homocitrate synthase family. LeuA type 1 subfamily. Homodimer. Requires Mn(2+) as cofactor.

The protein resides in the cytoplasm. The enzyme catalyses 3-methyl-2-oxobutanoate + acetyl-CoA + H2O = (2S)-2-isopropylmalate + CoA + H(+). Its pathway is amino-acid biosynthesis; L-leucine biosynthesis; L-leucine from 3-methyl-2-oxobutanoate: step 1/4. Catalyzes the condensation of the acetyl group of acetyl-CoA with 3-methyl-2-oxobutanoate (2-ketoisovalerate) to form 3-carboxy-3-hydroxy-4-methylpentanoate (2-isopropylmalate). The chain is 2-isopropylmalate synthase from Nitrosomonas europaea (strain ATCC 19718 / CIP 103999 / KCTC 2705 / NBRC 14298).